The following is a 275-amino-acid chain: Pantothenate synthetase (275 aa).

Residue 26-33 participates in ATP binding; it reads MGNLHDGH. The active-site Proton donor is the His-33. (R)-pantoate is bound at residue Gln-57. Gln-57 provides a ligand contact to beta-alanine. 144 to 147 contacts ATP; the sequence is GKKD. Residue Gln-150 participates in (R)-pantoate binding. Residues Val-173 and 181–184 each bind ATP; that span reads LSSR.

The protein belongs to the pantothenate synthetase family. Homodimer.

The protein resides in the cytoplasm. It carries out the reaction (R)-pantoate + beta-alanine + ATP = (R)-pantothenate + AMP + diphosphate + H(+). It functions in the pathway cofactor biosynthesis; (R)-pantothenate biosynthesis; (R)-pantothenate from (R)-pantoate and beta-alanine: step 1/1. In terms of biological role, catalyzes the condensation of pantoate with beta-alanine in an ATP-dependent reaction via a pantoyl-adenylate intermediate. This Azoarcus sp. (strain BH72) protein is Pantothenate synthetase.